The primary structure comprises 254 residues: Pyrroloquinoline-quinone synthase (254 aa).

The protein belongs to the PqqC family.

It carries out the reaction 6-(2-amino-2-carboxyethyl)-7,8-dioxo-1,2,3,4,7,8-hexahydroquinoline-2,4-dicarboxylate + 3 O2 = pyrroloquinoline quinone + 2 H2O2 + 2 H2O + H(+). It functions in the pathway cofactor biosynthesis; pyrroloquinoline quinone biosynthesis. Ring cyclization and eight-electron oxidation of 3a-(2-amino-2-carboxyethyl)-4,5-dioxo-4,5,6,7,8,9-hexahydroquinoline-7,9-dicarboxylic-acid to PQQ. The sequence is that of Pyrroloquinoline-quinone synthase from Rhodopseudomonas palustris (strain ATCC BAA-98 / CGA009).